A 193-amino-acid polypeptide reads, in one-letter code: Large ribosomal subunit protein bL21 (193 aa).

Belongs to the bacterial ribosomal protein bL21 family. Part of the 50S ribosomal subunit. Contacts protein L20.

In terms of biological role, this protein binds to 23S rRNA in the presence of protein L20. This chain is Large ribosomal subunit protein bL21, found in Ruegeria pomeroyi (strain ATCC 700808 / DSM 15171 / DSS-3) (Silicibacter pomeroyi).